Consider the following 208-residue polypeptide: Small ribosomal subunit protein uS4 (208 aa).

An S4 RNA-binding domain is found at 98–161; sequence QRLDNVVFRM…KSNPQVVRAL (64 aa).

It belongs to the universal ribosomal protein uS4 family. As to quaternary structure, part of the 30S ribosomal subunit. Contacts protein S5. The interaction surface between S4 and S5 is involved in control of translational fidelity.

Its function is as follows. One of the primary rRNA binding proteins, it binds directly to 16S rRNA where it nucleates assembly of the body of the 30S subunit. Functionally, with S5 and S12 plays an important role in translational accuracy. This is Small ribosomal subunit protein uS4 from Aliarcobacter butzleri (strain RM4018) (Arcobacter butzleri).